Reading from the N-terminus, the 199-residue chain is NAD(P)H dehydrogenase (quinone) (199 aa).

The Flavodoxin-like domain occupies 4–190 (VLVLYYSAYG…AGARYQGKTI (187 aa)). FMN contacts are provided by residues 10–15 (SAYGHI) and 78–80 (TRF). Tyr-12 contacts NAD(+). Residue Trp-98 participates in substrate binding. Residues 113–119 (STATQHG) and His-134 contribute to the FMN site.

Belongs to the WrbA family. Requires FMN as cofactor.

It carries out the reaction a quinone + NADH + H(+) = a quinol + NAD(+). The catalysed reaction is a quinone + NADPH + H(+) = a quinol + NADP(+). The chain is NAD(P)H dehydrogenase (quinone) from Rhodopseudomonas palustris (strain BisB5).